The sequence spans 687 residues: Adhesion G-protein coupled receptor G1 (687 aa).

The signal sequence occupies residues M1–G25. R26–R33 contacts heparin. At R26–Y402 the chain is on the extracellular side. 2 disulfides stabilise this stretch: C35–C91 and C121–C177. N39, N148, and N171 each carry an N-linked (GlcNAc...) asparagine glycan. L190–P200 contributes to the heparin binding site. Residues D224–V395 enclose the GAIN-B domain. N234, N303, N324, and N341 each carry an N-linked (GlcNAc...) asparagine glycan. 2 disulfides stabilise this stretch: C346/C377 and C366/C379. The segment at C346–V395 is GPS. Positions Y384–A397 are stachel. A helical transmembrane segment spans residues L403 to A423. Over A424 to N442 the chain is Cytoplasmic. A helical transmembrane segment spans residues L443–T463. Residues G464–R470 are Extracellular-facing. A helical transmembrane segment spans residues A471–G491. Residues Y492–K512 are Cytoplasmic-facing. A helical membrane pass occupies residues L513–V533. The Extracellular segment spans residues D534 to G570. Residues L571–L591 form a helical membrane-spanning segment. Residues R592–V603 are Cytoplasmic-facing. A helical transmembrane segment spans residues L604–F624. Over A625 to Q630 the chain is Extracellular. A helical membrane pass occupies residues L631–W651. At Y652 to I687 the chain is on the cytoplasmic side. The disordered stretch occupies residues S664–I687. Residues S678–I687 are compositionally biased toward low complexity.

It belongs to the G-protein coupled receptor 2 family. LN-TM7 subfamily. In terms of assembly, heterodimer of 2 chains generated by proteolytic processing; the large extracellular N-terminal fragment (ADGRG1 NT) and the membrane-bound C-terminal fragment (ADGRG1-CT) predominantly remain associated and non-covalently linked. ADGRG1 NT self-associates in a trans-trans manner; the homophilic interaction enhances receptor signaling. Interacts with TGM2. Interacts with heparin; leading to the reduction of ADGRG1 shedding. Interacts with COL3A1. Part of a GPCR-tetraspanin complex at least consisting of ADGRG1, CD81, eventually CD9, and GNA11 in which CD81 is enhancing the association of ADGRG1 with GNA11. Autoproteolytically cleaved into 2 fragments; the large extracellular N-terminal fragment (ADGRG1 NT) and the membrane-bound C-terminal fragment (ADGRG1 CT) predominantly remain associated and non-covalently linked. Shedding to yield the secreted ADGRG1 N-terminal fragment seems to involve metalloprotease(s). Post-translationally, ubiquitinated. Undergoes polyubiquitination upon activation.

It localises to the cell membrane. The protein resides in the secreted. The protein localises to the membrane raft. Forms a heterodimer of 2 chains generated by proteolytic processing that remain associated through non-covalent interactions mediated by the GAIN-B domain. In the inactivated receptor, the Stachel sequence (also named stalk) is embedded in the GAIN-B domain, where it adopts a beta-strand conformation. On activation, the Stachel moves into the 7 transmembrane region and adopts a twisted hook-shaped configuration that forms contacts within the receptor, leading to coupling of a G-alpha protein, which activates signaling. The cleaved GAIN-B and N-terminal domains can then dissociate from the rest of the receptor. In terms of biological role, adhesion G-protein coupled receptor (aGPCR) for steroid hormone 17alpha-hydroxypregnenolone (17-OH), which is involved in cell adhesion and cell-cell interactions. Ligand binding causes a conformation change that triggers signaling via guanine nucleotide-binding proteins (G proteins) and modulates the activity of downstream effectors, such as RhoA pathway. ADGRG1 is coupled to G(12) and/or G(13) G proteins (GNA12 and GNA13, respectively) and mediates the activation Rho small GTPases. Acts as a potent suppressor of ferroptosis: binding to 17-OH-binding initiates signaling that down-regulates CD36 and alleviates ferroptosis-induced liver injury. Ligand-binding also induces cell adhesion activity via association with proteins such as collagen III/COL3A1 and TGM2. Mediates cell matrix adhesion in developing neurons and hematopoietic stem cells. Involved in cortical development, specifically in maintenance of the pial basement membrane integrity and in cortical lamination: association with COL3A1 in the developing brain inhibits neuronal migration via activation of the RhoA pathway. Together with TGM2, acts as a regulator of myelination and myelin repair in oligodendrocyte precursor cells. Acts as a hemostatic sensor of shear force: G protein-coupled receptor signaling is activated in response to shear force in platelets, promoting G(13) G protein signaling, and platelet shape change and aggregation in a COL3A1-dependent manner. Acts as an inhibitor of VEGFA production thereby inhibiting angiogenesis through a signaling pathway mediated by PRKCA. Plays a role in the maintenance of hematopoietic stem cells in bone marrow niche. Plays an essential role in testis development. This chain is Adhesion G-protein coupled receptor G1 (ADGRG1), found in Gorilla gorilla gorilla (Western lowland gorilla).